Reading from the N-terminus, the 179-residue chain is Large ribosomal subunit protein uL6 (179 aa).

It belongs to the universal ribosomal protein uL6 family. As to quaternary structure, part of the 50S ribosomal subunit.

This protein binds to the 23S rRNA, and is important in its secondary structure. It is located near the subunit interface in the base of the L7/L12 stalk, and near the tRNA binding site of the peptidyltransferase center. The polypeptide is Large ribosomal subunit protein uL6 (Mycobacteroides abscessus (strain ATCC 19977 / DSM 44196 / CCUG 20993 / CIP 104536 / JCM 13569 / NCTC 13031 / TMC 1543 / L948) (Mycobacterium abscessus)).